The sequence spans 270 residues: MKSNNNPKTMVVERYTITDRIAHTVHAIAMIVLIITGLKIYAGWEFMSFHTARTLHMIAVPFLLAVNWILIPYNIFSEGHGLMGKISHFVDHYIFGPKDLARLVGIIKNFFGKGEYPAFTVYDEKTGHYKTKLHPLMKILIPLEGLALFLITVSGIVLYKLDWSLFGLPVAQWIISISGMIAPTFGMTPVGFLRVLHLLMTYWFIFELVVHVGILEFDPRVWKYYKAIFWSGKEDLSDRHFVEVARNNPNHLPDRELWRDPSDKPSEVKE.

Helical transmembrane passes span 27-47 (AIAMIVLIITGLKIYAGWEFM), 57-77 (MIAVPFLLAVNWILIPYNIFS), 139-159 (ILIPLEGLALFLITVSGIVLY), 173-193 (WIISISGMIAPTFGMTPVGFL), and 195-215 (VLHLLMTYWFIFELVVHVGIL).

It belongs to the HupC/HyaC/HydC family. In terms of assembly, composed of a large subunit (VhtA), a small subunit (VhtG) and a cytochrome subunit (VhtC). The cofactor is heme b.

It localises to the cell membrane. The enzyme catalyses methanophenazine + H2 = dihydromethanophenazine. In terms of biological role, part of the F420 non-reducing hydrogenase II complex that catalyzes the reduction of methanophenazine to dihydromethanophenazine. The polypeptide is F420 non-reducing hydrogenase II cytochrome subunit (Methanosarcina mazei (strain ATCC BAA-159 / DSM 3647 / Goe1 / Go1 / JCM 11833 / OCM 88) (Methanosarcina frisia)).